The primary structure comprises 2230 residues: Golgin subfamily A member 4 (2230 aa).

Positions methionine 1 to lysine 64 are disordered. Serine 10 is subject to Phosphoserine. A compositionally biased stretch (low complexity) spans glutamate 12–serine 41. The residue at position 39 (threonine 39) is a Phosphothreonine. Phosphoserine is present on residues serine 41, serine 71, serine 78, and serine 89. The span at serine 87–leucine 107 shows a compositional bias: basic and acidic residues. Residues serine 87 to leucine 127 form a disordered region. The interval serine 133–lysine 203 is interaction with MACF1. Residues serine 133–tyrosine 2185 adopt a coiled-coil conformation. Serine 266 is modified (phosphoserine). 2 N-linked (GlcNAc...) asparagine glycosylation sites follow: asparagine 585 and asparagine 1612. One can recognise a GRIP domain in the interval leucine 2168 to arginine 2215. Threonine 2223 carries the post-translational modification Phosphothreonine.

Homodimer. Interacts with RAB6A. Interacts with GTP-bound ARL1 and ARL3. Interacts with MACF1. Directly interacts with TBC1D23. Interacts with FAM91A1; this interaction may be mediated by TBC1D23.

The protein localises to the cytoplasm. Its subcellular location is the golgi apparatus membrane. It is found in the golgi apparatus. The protein resides in the trans-Golgi network membrane. Involved in vesicular trafficking at the Golgi apparatus level. May play a role in delivery of transport vesicles containing GPI-linked proteins from the trans-Golgi network through its interaction with MACF1. Involved in endosome-to-Golgi trafficking. This Homo sapiens (Human) protein is Golgin subfamily A member 4 (GOLGA4).